The primary structure comprises 251 residues: MNTSLTQLCFWALQILLMSNLLLWEDVVSVPTIGSGSGVSEMLTEDLFDDAIILSQHINSLAIETRRIFLSNNFSSDMFITFTLQFNRHDEFVVNGLNSCHTLPLKSPKTEKEAKRISLPDFMNMILSILRAWDNPLHHMETELKSMPGAPFAILARVKDIEVKNKILLDRIMKIAKKVKYGFEENEVYPAWSELASLQSANEESRFFALYKLSYCLFVDTDKVEHYLKHLKCRYFDGYMCQDSVNQINLL.

An N-terminal signal peptide occupies residues 1-29 (MNTSLTQLCFWALQILLMSNLLLWEDVVS). 2 N-linked (GlcNAc...) asparagine glycosylation sites follow: asparagine 2 and asparagine 73. Disulfide bonds link cysteine 100–cysteine 216 and cysteine 233–cysteine 241.

It belongs to the somatotropin/prolactin family. In terms of tissue distribution, expression restricted to placenta. Abundantly expressed in trophoblast cells of the junctional zone and trophoblasts migrating into the mesometrial decidua.

Its subcellular location is the secreted. This chain is Prolactin-7B1 (Prl7b1), found in Mus musculus (Mouse).